Here is a 155-residue protein sequence, read N- to C-terminus: Ribonuclease H (155 aa).

The region spanning 4-146 (NIDVVEIYTD…CDRLATEQIK (143 aa)) is the RNase H type-1 domain. Positions 13, 51, 73, and 138 each coordinate Mg(2+).

It belongs to the RNase H family. Monomer. It depends on Mg(2+) as a cofactor.

It is found in the cytoplasm. The catalysed reaction is Endonucleolytic cleavage to 5'-phosphomonoester.. In terms of biological role, endonuclease that specifically degrades the RNA of RNA-DNA hybrids. This is Ribonuclease H from Thermoanaerobacter pseudethanolicus (strain ATCC 33223 / 39E) (Clostridium thermohydrosulfuricum).